Reading from the N-terminus, the 486-residue chain is MIRRVLPHGMGRGLLTRRPGTRRGGFSLDWDGKVSEIKKKIKSILPGRSCDLLQDTSHLPPEHSDVVIVGGGVLGLSVAYWLKKLESRRGAIRVLVVERDHTYSQASTGLSVGGICQQFSLPENIQLSLFSASFLRNINEYLAVVDAPPLDLRFNPSGYLLLASEKDAAAMESNVKVQRQEGAKVSLMSPDQLRNKFPWINTEGVALASYGMEDEGWFDPWCLLQGLRRKVQSLGVLFCQGEVTRFVSSSQRMLTTDDKAVVLKRIHEVHVKMDRSLEYQPVECAIVINAAGAWSAQIAALAGVGEGPPGTLQGTKLPVEPRKRYVYVWHCPQGPGLETPLVADTSGAYFRREGLGSNYLGGRSPTEQEEPDPANLEVDHDFFQDKVWPHLALRVPAFETLKVQSAWAGYYDYNTFDQNGVVGPHPLVVNMYFATGFSGHGLQQAPGIGRAVAEMVLKGRFQTIDLSPFLFTRFYLGEKIQENNII.

The chain crosses the membrane as a helical span at residues 62 to 82 (EHSDVVIVGGGVLGLSVAYWL).

Associates with components of the mitochondrial respiratory chain complex I. FAD is required as a cofactor.

The protein resides in the mitochondrion inner membrane. Its function is as follows. Required for the assembly of the mitochondrial membrane respiratory chain NADH dehydrogenase (Complex I). Involved in mid-late stages of complex I assembly. The sequence is that of FAD-dependent oxidoreductase domain-containing protein 1 from Homo sapiens (Human).